A 609-amino-acid chain; its full sequence is Indole-3-acetic acid-amido synthetase GH3.17 (609 aa).

Belongs to the IAA-amido conjugating enzyme family.

Its function is as follows. Catalyzes the synthesis of indole-3-acetic acid (IAA)-amino acid conjugates, providing a mechanism for the plant to cope with the presence of excess auxin. Strongly reactive with Glu, Gln, Trp, Asp, Ala, Leu, Phe, Gly, Tyr, Met, Ile and Val. Appears to favor Glu over Asp while the other GH3 favor Asp over Glu. Little or no product formation with His, Ser, Thr, Arg, Lys, or Cys. Also active on pyruvic and butyric acid analogs of IAA, PAA and the synthetic auxin naphthaleneacetic acid (NAA). The two chlorinated synthetic auxin herbicides 2,4-D and 3,6-dichloro-o-anisic acid (dicamba) cannot be used as substrates. The protein is Indole-3-acetic acid-amido synthetase GH3.17 (GH3.17) of Arabidopsis thaliana (Mouse-ear cress).